The chain runs to 148 residues: Putative cyclin-dependent kinase inhibitor SPL2 (148 aa).

2 positions are modified to phosphoserine: S59 and S86.

The protein resides in the cytoplasmic granule. Its subcellular location is the cytoplasm. Putative cyclin-dependent kinase (CDK) inhibitor necessary and sufficient for PHO pathway-dependent down-regulation of low-affinity phosphate transport. The sequence is that of Putative cyclin-dependent kinase inhibitor SPL2 (SPL2) from Saccharomyces cerevisiae (strain YJM789) (Baker's yeast).